Reading from the N-terminus, the 1403-residue chain is DNA-directed RNA polymerase subunit beta' (1403 aa).

Residues Cys71, Cys73, Cys86, and Cys89 each contribute to the Zn(2+) site. Residues Asp462, Asp464, and Asp466 each coordinate Mg(2+). Zn(2+) is bound by residues Cys811, Cys885, Cys892, and Cys895.

The protein belongs to the RNA polymerase beta' chain family. In terms of assembly, the RNAP catalytic core consists of 2 alpha, 1 beta, 1 beta' and 1 omega subunit. When a sigma factor is associated with the core the holoenzyme is formed, which can initiate transcription. It depends on Mg(2+) as a cofactor. Zn(2+) is required as a cofactor.

The catalysed reaction is RNA(n) + a ribonucleoside 5'-triphosphate = RNA(n+1) + diphosphate. In terms of biological role, DNA-dependent RNA polymerase catalyzes the transcription of DNA into RNA using the four ribonucleoside triphosphates as substrates. The sequence is that of DNA-directed RNA polymerase subunit beta' from Bartonella tribocorum (strain CIP 105476 / IBS 506).